The chain runs to 732 residues: E3 ubiquitin-protein ligase DCST1 (732 aa).

Residues 1–46 (MAFLSSTLHSLGIFEKISRIKEVLKNRLLDLTKRRDQAREQQRKRP) lie on the Cytoplasmic side of the membrane. The helical transmembrane segment at 47–67 (HTIIQGLLLWSLPVSWIRFLW) threads the bilayer. The Extracellular portion of the chain corresponds to 68 to 76 (RQPGEFPVT). A helical membrane pass occupies residues 77–97 (AFLLGAGTGGLLAIGLFQLLV). Residues 98–107 (NPMNIYEEQK) are Cytoplasmic-facing. The helical transmembrane segment at 108–128 (VVALYCLASLGAIGWGTSPHI) threads the bilayer. Topologically, residues 129–394 (RCASLLLVPK…VRDYVRQQET (266 aa)) are extracellular. Residues N184, N217, N346, and N374 are each glycosylated (N-linked (GlcNAc...) asparagine). Residues 395-415 (YLQWAMGLLHVLLSCTFLLVF) form a helical membrane-spanning segment. The Cytoplasmic segment spans residues 416–489 (HSAFSYMDHY…RYVIRELLET (74 aa)). Residues 490–510 (LPIVLLLLVLCAIDWALYSVF) traverse the membrane as a helical segment. Over 511-576 (DTIRQHSFVQ…PQPISLNARD (66 aa)) the chain is Extracellular. The N-linked (GlcNAc...) asparagine glycan is linked to N551. The chain crosses the membrane as a helical span at residues 577–597 (YFKASLPTLLLVCLCLAQAFG). At 598 to 732 (YRLRRVIAAF…DSNDDAVYGD (135 aa)) the chain is on the cytoplasmic side. Residues 672 to 711 (CVVCQAMETPDSYVCPTPDCKALYCRSCWDDMQRLCPVCT) form an RING-type; degenerate zinc finger.

In terms of assembly, interacts with STAT2; the interaction results in STAT2 'Lys-48'-linked ubiquitination leading to its proteasomal degradation. Interacts with DCST2. In terms of tissue distribution, expressed in testis.

The protein resides in the cell membrane. It localises to the cytoplasmic vesicle. It is found in the secretory vesicle. The protein localises to the acrosome membrane. The catalysed reaction is S-ubiquitinyl-[E2 ubiquitin-conjugating enzyme]-L-cysteine + [acceptor protein]-L-lysine = [E2 ubiquitin-conjugating enzyme]-L-cysteine + N(6)-ubiquitinyl-[acceptor protein]-L-lysine.. It participates in protein modification; protein ubiquitination. Its function is as follows. E3 ubiquitin-protein ligase which mediates 'Lys-48'-linked ubiquitination of STAT2 and induces its proteasomal degradation thereby negatively regulating type-I-interferon signaling. Essential sperm cell-surface protein required for sperm-egg fusion and fertilization. The sequence is that of E3 ubiquitin-protein ligase DCST1 (Dcst1) from Mus musculus (Mouse).